Here is a 193-residue protein sequence, read N- to C-terminus: Probable nicotinate-nucleotide adenylyltransferase (193 aa).

The protein belongs to the NadD family.

The catalysed reaction is nicotinate beta-D-ribonucleotide + ATP + H(+) = deamido-NAD(+) + diphosphate. The protein operates within cofactor biosynthesis; NAD(+) biosynthesis; deamido-NAD(+) from nicotinate D-ribonucleotide: step 1/1. Its function is as follows. Catalyzes the reversible adenylation of nicotinate mononucleotide (NaMN) to nicotinic acid adenine dinucleotide (NaAD). This Flavobacterium johnsoniae (strain ATCC 17061 / DSM 2064 / JCM 8514 / BCRC 14874 / CCUG 350202 / NBRC 14942 / NCIMB 11054 / UW101) (Cytophaga johnsonae) protein is Probable nicotinate-nucleotide adenylyltransferase.